The following is a 229-amino-acid chain: Flagellar L-ring protein (229 aa).

Residues 1–25 (MKQVRLLPPAPVRAVCALAVAALAG) form the signal peptide. A lipid anchor (N-palmitoyl cysteine) is attached at Cys26. Cys26 is lipidated: S-diacylglycerol cysteine.

The protein belongs to the FlgH family. In terms of assembly, the basal body constitutes a major portion of the flagellar organelle and consists of four rings (L,P,S, and M) mounted on a central rod.

Its subcellular location is the cell outer membrane. The protein localises to the bacterial flagellum basal body. Its function is as follows. Assembles around the rod to form the L-ring and probably protects the motor/basal body from shearing forces during rotation. The sequence is that of Flagellar L-ring protein from Burkholderia ambifaria (strain ATCC BAA-244 / DSM 16087 / CCUG 44356 / LMG 19182 / AMMD) (Burkholderia cepacia (strain AMMD)).